Reading from the N-terminus, the 244-residue chain is Ribonuclease 3 2 (244 aa).

The 126-residue stretch at 11 to 136 (LKALLRRLGL…LLGALYLSVG (126 aa)) folds into the RNase III domain. Position 50 (Glu-50) interacts with Mg(2+). The active site involves Asp-54. Asp-122 and Glu-125 together coordinate Mg(2+). Glu-125 is an active-site residue. In terms of domain architecture, DRBM spans 164–234 (NYKEALQAWT…AQQAYQDFIA (71 aa)).

The protein belongs to the ribonuclease III family. As to quaternary structure, homodimer. Mg(2+) is required as a cofactor.

The protein resides in the cytoplasm. It carries out the reaction Endonucleolytic cleavage to 5'-phosphomonoester.. Digests double-stranded RNA. Involved in the processing of primary rRNA transcript to yield the immediate precursors to the large and small rRNAs (23S and 16S). Processes some mRNAs, and tRNAs when they are encoded in the rRNA operon. Processes pre-crRNA and tracrRNA of type II CRISPR loci if present in the organism. The sequence is that of Ribonuclease 3 2 from Synechocystis sp. (strain ATCC 27184 / PCC 6803 / Kazusa).